The chain runs to 888 residues: Tyrosine-protein kinase receptor UFO (888 aa).

An N-terminal signal peptide occupies residues M1–A18. Residues A19–W86 form an interaction with GAS6 region. Topologically, residues A19–W445 are extracellular. Ig-like C2-type domains lie at P30–S122 and P133–T216. N37 carries N-linked (GlcNAc...) asparagine glycosylation. C50 and C111 are joined by a disulfide. N-linked (GlcNAc...) asparagine glycosylation is found at N151 and N192. C154 and C199 form a disulfide bridge. Fibronectin type-III domains are found at residues R221–G325 and P330–P422. Residues N333, N339, and N395 are each glycosylated (N-linked (GlcNAc...) asparagine). The chain crosses the membrane as a helical span at residues Y446–V466. Residues H467–A888 are Cytoplasmic-facing. A Protein kinase domain is found at V530–L801. ATP-binding positions include L536–V544 and K561. The active-site Proton acceptor is the D666. Y697, Y773, and Y815 each carry phosphotyrosine; by autocatalysis. Residues E820–C846 are disordered. Residue Y860 is modified to Phosphotyrosine; by autocatalysis. A disordered region spans residues S865–A888.

It belongs to the protein kinase superfamily. Tyr protein kinase family. AXL/UFO subfamily. In terms of assembly, heterodimer and heterotetramer with ligand GAS6. Interacts with CBL, GRB2, LCK, NCK2, PIK3R1, PIK3R2, PIK3R3, PLCG1, SOCS1 and TNS2. Part of a complex including AXL, TNK2 and GRB2, in which GRB2 promotes AXL recruitment by TNK2. Post-translationally, monoubiquitinated upon GAS6-binding. A very small proportion of the receptor could be subjected to polyubiquitination in a very transient fashion. Phosphorylated at tyrosine residues by autocatalysis, which activates kinase activity. In distinct substructures of a broad spectrum of developing tissues (in the late embryogenesis). In cells forming organ capsules as well as in connective tissue structures (in adult).

The protein localises to the cell membrane. It carries out the reaction L-tyrosyl-[protein] + ATP = O-phospho-L-tyrosyl-[protein] + ADP + H(+). With respect to regulation, activated by GAS6-binding and subsequent autophosphorylation. In terms of biological role, receptor tyrosine kinase that transduces signals from the extracellular matrix into the cytoplasm by binding growth factor GAS6 and which is thus regulating many physiological processes including cell survival, cell proliferation, migration and differentiation. Ligand binding at the cell surface induces dimerization and autophosphorylation of AXL. Following activation by ligand, AXL binds and induces tyrosine phosphorylation of PI3-kinase subunits PIK3R1, PIK3R2 and PIK3R3; but also GRB2, PLCG1, LCK and PTPN11. Other downstream substrate candidates for AXL are CBL, NCK2, SOCS1 and TNS2. Recruitment of GRB2 and phosphatidylinositol 3 kinase regulatory subunits by AXL leads to the downstream activation of the AKT kinase. GAS6/AXL signaling plays a role in various processes such as endothelial cell survival during acidification by preventing apoptosis, optimal cytokine signaling during human natural killer cell development, hepatic regeneration, gonadotropin-releasing hormone neuron survival and migration, platelet activation, or regulation of thrombotic responses. Also plays an important role in inhibition of Toll-like receptors (TLRs)-mediated innate immune response. The polypeptide is Tyrosine-protein kinase receptor UFO (Axl) (Mus musculus (Mouse)).